Here is a 640-residue protein sequence, read N- to C-terminus: Pleckstrin homology-like domain family B member 3 (640 aa).

5 disordered regions span residues 1 to 100 (MGTR…AARR), 162 to 189 (LEQQ…ERDR), 241 to 262 (LERE…VPDP), 387 to 412 (GLQR…RPLS), and 476 to 504 (REGT…PHPP). Positions 76 to 90 (PPIAMAATPPASTSS) are enriched in low complexity. Residues 104 to 327 (QQLEALTRVA…ERSRLLELNC (224 aa)) adopt a coiled-coil conformation. The segment covering 170–189 (QRGRQQREQEQRRLSQERDR) has biased composition (basic and acidic residues). The stretch at 454–481 (DIAHMERLLQQAMAERERLLKAREGTRR) forms a coiled coil. Positions 495 to 504 (TAPPTPPHPP) are enriched in pro residues. In terms of domain architecture, PH spans 532–635 (GCCCRGPLVK…WMDVIVTAAD (104 aa)).

The polypeptide is Pleckstrin homology-like domain family B member 3 (PHLDB3) (Homo sapiens (Human)).